The primary structure comprises 985 residues: Serine/threonine-protein kinase N2 (985 aa).

Residues 33 to 109 enclose the REM-1 1 domain; it reads KLDFSDTIVQ…LQELNAHIVV (77 aa). Lys-77 bears the N6-acetyllysine mark. Ser-110 is subject to Phosphoserine. The segment at 111 to 136 is disordered; that stretch reads DPEDYTDCPRTPDTPNSDSRSSTSNN. A phosphothreonine mark is found at Thr-121 and Thr-124. Over residues 121–136 the composition is skewed to low complexity; the sequence is TPDTPNSDSRSSTSNN. REM-1 domains lie at 121–204 and 207–286; these read TPDT…TNEL and DNAK…ELPK. 4 positions are modified to phosphoserine: Ser-303, Ser-307, Ser-361, and Ser-363. The segment at 352–383 is disordered; it reads ATSVALPGWSPSENRSSFMSRTSKSKSGSSRN. The 121-residue stretch at 354–474 folds into the C2 domain; sequence SVALPGWSPS…LYLEPQGTLF (121 aa). Positions 366–382 are enriched in low complexity; the sequence is RSSFMSRTSKSKSGSSR. Residues 383-464 form a necessary to rescue apical junction formation region; that stretch reads NLLKTDDLSN…FLDNQRHGMA (82 aa). Phosphoserine is present on residues Ser-536, Ser-584, Ser-621, and Ser-632. A disordered region spans residues 570–590; that stretch reads DLEPEAPPAPPRASSLGEIDD. The Protein kinase domain occupies 658-917; it reads FRCCAVLGRG…AEDVKKHPFF (260 aa). ATP-binding positions include 664-672 and Lys-687; that span reads LGRGHFGKV. Asp-783 acts as the Proton acceptor in catalysis. At Thr-817 the chain carries Phosphothreonine; by PDPK1. The segment at 918 to 978 is necessary for the catalytic activity; sequence RLTDWSALLD…EEEQEMFRDF (61 aa). The 68-residue stretch at 918 to 985 folds into the AGC-kinase C-terminal domain; that stretch reads RLTDWSALLD…RDFDYVADWC (68 aa). Ser-953 is subject to Phosphoserine. A Phosphothreonine modification is found at Thr-959. The interval 979-985 is negatively regulates the responsiveness of the catalytic activity by cardiolipin and is required for optimal activation by the GTP-bound RhoA; the sequence is DYVADWC.

Belongs to the protein kinase superfamily. AGC Ser/Thr protein kinase family. PKC subfamily. As to quaternary structure, interacts (via the REM repeats) with RHOA (GTP-bound form preferentially) and interacts (via the REM repeats) with RAC1 (GTP-bound form preferentially); the interactions induce its autophosphorylation. Interacts with RHOC. Interacts with NCK1 (via SH3 domains) and NCK2. Interacts with CD44. Interacts (via C-terminal kinase domain) with PDPK1; the interaction stimulates PDPK1 kinase activity. Interacts with MAP3K2; the interaction activates PRK2 kinase activity in a MAP3K2-independent kinase activity. Interacts (via C-terminal domain) with AKT1; the interaction occurs with the C-terminal cleavage product of PRK2 in apoptotic cells. Interacts (via C-terminus) with PTPN13 (via PDZ 3 domain). Interacts with CDK10. In terms of processing, phosphorylated during mitosis. Autophosphorylated. Phosphorylated. Binding to Rho and Rac promotes autophosphorylation and phosphorylation on serine and threonine residues. Phosphorylated by CDK10. Proteolytically cleaved by caspase-3 during the induction of apoptotic cell death. Activated by limited proteolysis with trypsin. As to expression, expressed in liver (at protein level).

Its subcellular location is the cytoplasm. The protein resides in the nucleus. The protein localises to the membrane. It is found in the cell projection. It localises to the lamellipodium. Its subcellular location is the cytoskeleton. The protein resides in the cleavage furrow. The protein localises to the midbody. It is found in the cell junction. It catalyses the reaction L-seryl-[protein] + ATP = O-phospho-L-seryl-[protein] + ADP + H(+). It carries out the reaction L-threonyl-[protein] + ATP = O-phospho-L-threonyl-[protein] + ADP + H(+). Its activity is regulated as follows. Kinase activity is activated upon binding to GTP-bound Rho1/Rac1 GTPases. Activated by caspase-3 (CASP3) cleavage during apoptosis. Activated by lipids, particularly cardiolipin and to a lesser extent by other acidic phospholipids and unsaturated fatty acids. Two specific sites, Thr-817 (activation loop of the kinase domain) and Thr-959 (turn motif), need to be phosphorylated for its full activation. Its function is as follows. PKC-related serine/threonine-protein kinase and Rho/Rac effector protein that participates in specific signal transduction responses in the cell. Plays a role in the regulation of cell cycle progression, actin cytoskeleton assembly, cell migration, cell adhesion, tumor cell invasion and transcription activation signaling processes. Phosphorylates CTTN in hyaluronan-induced astrocytes and hence decreases CTTN ability to associate with filamentous actin. Phosphorylates HDAC5, therefore lead to impair HDAC5 import. Direct RhoA target required for the regulation of the maturation of primordial junctions into apical junction formation in bronchial epithelial cells. Required for G2/M phases of the cell cycle progression and abscission during cytokinesis in a ECT2-dependent manner. Stimulates FYN kinase activity that is required for establishment of skin cell-cell adhesion during keratinocytes differentiation. Regulates epithelial bladder cells speed and direction of movement during cell migration and tumor cell invasion. Inhibits Akt pro-survival-induced kinase activity. Mediates Rho protein-induced transcriptional activation via the c-fos serum response factor (SRF). Involved in the negative regulation of ciliogenesis. The protein is Serine/threonine-protein kinase N2 (Pkn2) of Rattus norvegicus (Rat).